Consider the following 212-residue polypeptide: N-(5'-phosphoribosyl)anthranilate isomerase (212 aa).

Belongs to the TrpF family.

The enzyme catalyses N-(5-phospho-beta-D-ribosyl)anthranilate = 1-(2-carboxyphenylamino)-1-deoxy-D-ribulose 5-phosphate. It functions in the pathway amino-acid biosynthesis; L-tryptophan biosynthesis; L-tryptophan from chorismate: step 3/5. The chain is N-(5'-phosphoribosyl)anthranilate isomerase from Microcystis aeruginosa (strain NIES-843 / IAM M-2473).